We begin with the raw amino-acid sequence, 205 residues long: Holliday junction branch migration complex subunit RuvA (205 aa).

The interval 1-64 (MIGKLKGVVD…EDMIRLYGFR (64 aa)) is domain I. Residues 65–143 (SDAEREWFRL…AFAPVDPALI (79 aa)) are domain II. The segment at 144–152 (RLAGAVEER) is flexible linker. Positions 153 to 205 (TAPQPVADAISALVNLGYPQIQASAAVAAALQGAGEGAEAKTLIRLGLRELAR) are domain III.

The protein belongs to the RuvA family. Homotetramer. Forms an RuvA(8)-RuvB(12)-Holliday junction (HJ) complex. HJ DNA is sandwiched between 2 RuvA tetramers; dsDNA enters through RuvA and exits via RuvB. An RuvB hexamer assembles on each DNA strand where it exits the tetramer. Each RuvB hexamer is contacted by two RuvA subunits (via domain III) on 2 adjacent RuvB subunits; this complex drives branch migration. In the full resolvosome a probable DNA-RuvA(4)-RuvB(12)-RuvC(2) complex forms which resolves the HJ.

It localises to the cytoplasm. The RuvA-RuvB-RuvC complex processes Holliday junction (HJ) DNA during genetic recombination and DNA repair, while the RuvA-RuvB complex plays an important role in the rescue of blocked DNA replication forks via replication fork reversal (RFR). RuvA specifically binds to HJ cruciform DNA, conferring on it an open structure. The RuvB hexamer acts as an ATP-dependent pump, pulling dsDNA into and through the RuvAB complex. HJ branch migration allows RuvC to scan DNA until it finds its consensus sequence, where it cleaves and resolves the cruciform DNA. The sequence is that of Holliday junction branch migration complex subunit RuvA from Methylobacterium nodulans (strain LMG 21967 / CNCM I-2342 / ORS 2060).